Here is a 94-residue protein sequence, read N- to C-terminus: Phosphoribosyl-ATP pyrophosphatase (94 aa).

Belongs to the PRA-PH family.

The protein localises to the cytoplasm. The catalysed reaction is 1-(5-phospho-beta-D-ribosyl)-ATP + H2O = 1-(5-phospho-beta-D-ribosyl)-5'-AMP + diphosphate + H(+). It functions in the pathway amino-acid biosynthesis; L-histidine biosynthesis; L-histidine from 5-phospho-alpha-D-ribose 1-diphosphate: step 2/9. This chain is Phosphoribosyl-ATP pyrophosphatase, found in Pyrobaculum arsenaticum (strain DSM 13514 / JCM 11321 / PZ6).